Here is a 571-residue protein sequence, read N- to C-terminus: Proline--tRNA ligase (571 aa).

This sequence belongs to the class-II aminoacyl-tRNA synthetase family. ProS type 1 subfamily. In terms of assembly, homodimer.

Its subcellular location is the cytoplasm. The catalysed reaction is tRNA(Pro) + L-proline + ATP = L-prolyl-tRNA(Pro) + AMP + diphosphate. Catalyzes the attachment of proline to tRNA(Pro) in a two-step reaction: proline is first activated by ATP to form Pro-AMP and then transferred to the acceptor end of tRNA(Pro). As ProRS can inadvertently accommodate and process non-cognate amino acids such as alanine and cysteine, to avoid such errors it has two additional distinct editing activities against alanine. One activity is designated as 'pretransfer' editing and involves the tRNA(Pro)-independent hydrolysis of activated Ala-AMP. The other activity is designated 'posttransfer' editing and involves deacylation of mischarged Ala-tRNA(Pro). The misacylated Cys-tRNA(Pro) is not edited by ProRS. This Acinetobacter baumannii (strain AB307-0294) protein is Proline--tRNA ligase.